The following is a 733-amino-acid chain: Submandibular gland protein C (733 aa).

An N-terminal signal peptide occupies residues 1–20; that stretch reads MKLILLYLAVVLCFVGKARS. The interval 48–91 is disordered; sequence KSSGGSKDYNLSDGGKSNSRKNLSPATGGSATQQSNLDDSHAPN. Residue asparagine 57 is glycosylated (N-linked (GlcNAc...) asparagine). Polar residues predominate over residues 62–84; that stretch reads GKSNSRKNLSPATGGSATQQSNL. Residues asparagine 141 and asparagine 187 are each glycosylated (N-linked (GlcNAc...) asparagine). 4 disordered regions span residues 172-204, 249-330, 369-450, and 496-733; these read GQQA…ADKP, LTED…NSSN, and SVTE…PSVA. A compositionally biased stretch (polar residues) spans 186–199; the sequence is ENSSLSTGSATSNK. Low complexity predominate over residues 256–270; sequence TSTSASVSGDSSTSS. A compositionally biased stretch (polar residues) spans 300 to 318; sequence GSKQNVEDSTLSTGSATSN. Residue asparagine 327 is glycosylated (N-linked (GlcNAc...) asparagine). Low complexity predominate over residues 376–390; sequence TSTSASVSGDSSTSS. Over residues 420-438 the composition is skewed to polar residues; that stretch reads GSKQNVEDSTLSTGSATSN. Residues asparagine 447, asparagine 514, and asparagine 528 are each glycosylated (N-linked (GlcNAc...) asparagine). Composition is skewed to polar residues over residues 496–516 and 525–535; these read SVTE…NNLS and NPTNGSSSASS. Positions 538-552 are enriched in basic and acidic residues; it reads KPYEEGMRKLLKFLE. Low complexity-rich tracts occupy residues 563–574 and 609–619; these read SVSGMSSESSRS and SSNSSTGSATS. Residue asparagine 611 is glycosylated (N-linked (GlcNAc...) asparagine). Over residues 654 to 665 the composition is skewed to gly residues; the sequence is GFNGPEGVGENN. Positions 677–701 are enriched in low complexity; sequence GSKSDSGSHNLSSGSGSRSNVSTGG. Asparagine 686 and asparagine 696 each carry an N-linked (GlcNAc...) asparagine glycan. Polar residues predominate over residues 722–733; that stretch reads TGKTQSGSPSVA.

N-glycosylated. In terms of tissue distribution, detected in terminal tubule cells of the submandibular gland (at protein level). Expressed in submandibular salivary glands of 3-day-old males but not adults. Expression in adult submandibular glands is restricted to females. Isoform 5 is expressed in both 3-day-old and adult sublingual glands.

The protein resides in the secreted. In Mus musculus (Mouse), this protein is Submandibular gland protein C (Muc19).